A 427-amino-acid polypeptide reads, in one-letter code: UPF0229 protein YeaH (427 aa).

The segment covering 79-90 has biased composition (basic and acidic residues); the sequence is NDHFVQNDRIER. The disordered stretch occupies residues 79–110; that stretch reads NDHFVQNDRIERPQGGGGGSGSGQGQASQDGE. Over residues 92–102 the composition is skewed to gly residues; the sequence is QGGGGGSGSGQ.

Belongs to the UPF0229 family.

The chain is UPF0229 protein YeaH from Shigella boydii serotype 18 (strain CDC 3083-94 / BS512).